A 254-amino-acid chain; its full sequence is Dihydroanticapsin 7-dehydrogenase (254 aa).

9–31 provides a ligand contact to NAD(+); it reads LITGGASGIGYAAVQAFLNQQAN. S139 contacts substrate. The active-site Proton acceptor is Y152.

This sequence belongs to the short-chain dehydrogenases/reductases (SDR) family.

The catalysed reaction is L-dihydroanticapsin + NAD(+) = L-anticapsin + NADH + H(+). It participates in antibiotic biosynthesis; bacilysin biosynthesis. Its function is as follows. Part of the bacABCDEFG operon responsible for the biosynthesis of bacilysin, an irreversible inactivator of the glutaminase domain of glucosamine synthetase. Catalyzes the dehydrogenation of the C7-hydroxyl group in the 4S-tetrahydrotyrosine (4S-H4Tyr) to yield anticapsin (epoxycyclohexanonyl-Ala). This Bacillus amyloliquefaciens (Bacillus velezensis) protein is Dihydroanticapsin 7-dehydrogenase.